Here is a 276-residue protein sequence, read N- to C-terminus: Large ribosomal subunit protein uL2 (276 aa).

Residues 225–276 (MNPNDHPHGGGEGRNPIGRNPVTPWGKPALGAKTRKKKNPSNRFIVKRRGKK) form a disordered region. Over residues 257–276 (KTRKKKNPSNRFIVKRRGKK) the composition is skewed to basic residues.

Belongs to the universal ribosomal protein uL2 family. Part of the 50S ribosomal subunit. Forms a bridge to the 30S subunit in the 70S ribosome.

One of the primary rRNA binding proteins. Required for association of the 30S and 50S subunits to form the 70S ribosome, for tRNA binding and peptide bond formation. It has been suggested to have peptidyltransferase activity; this is somewhat controversial. Makes several contacts with the 16S rRNA in the 70S ribosome. This chain is Large ribosomal subunit protein uL2, found in Desulfitobacterium hafniense (strain DSM 10664 / DCB-2).